The following is a 261-amino-acid chain: Undecaprenyl-diphosphatase (261 aa).

The next 8 membrane-spanning stretches (helical) occupy residues 1 to 21 (MTVL…FLPI), 40 to 60 (GLTF…AYFW), 79 to 99 (GRLF…GVLF), 106 to 126 (IFRS…GLWW), 140 to 160 (VNLF…IPGV), 185 to 205 (FLMS…ELPL), 210 to 230 (LAFI…IKFL), and 239 to 259 (YLLF…VFWL).

Belongs to the UppP family.

The protein localises to the cell membrane. The enzyme catalyses di-trans,octa-cis-undecaprenyl diphosphate + H2O = di-trans,octa-cis-undecaprenyl phosphate + phosphate + H(+). Its function is as follows. Catalyzes the dephosphorylation of undecaprenyl diphosphate (UPP). Confers resistance to bacitracin. The chain is Undecaprenyl-diphosphatase from Moorella thermoacetica (strain ATCC 39073 / JCM 9320).